The sequence spans 134 residues: Major capsid protein (134 aa).

In terms of assembly, homodimer.

It is found in the virion. Its function is as follows. Self-assembles to form a helical, filamentous nucleocapsid. The capsid proteins wrap around the DNA and maintain it in an A-form by non-specific desolvation and specific coordination of the DNA phosphate groups by positively charged residues. This certainly protects the viral DNA under conditions such as the extreme desiccation of its host. This Saccharolobus islandicus (Sulfolobus islandicus) protein is Major capsid protein.